Consider the following 268-residue polypeptide: Protein DEEPER ROOTING 1 (268 aa).

Residues 11–21 show a composition bias toward low complexity; sequence LNGKQGNKKPN. A disordered region spans residues 11–39; the sequence is LNGKQGNKKPNTVPITTHPAKQEPREEFS. The segment covering 30-39 has biased composition (basic and acidic residues); that stretch reads AKQEPREEFS. Residues 44–50 carry the IGT motif motif; sequence GLLAIGT. Positions 220–246 are disordered; sequence SRAASMKKYLEDRQIPTKKESNTEDDT. Residues 227-246 are compositionally biased toward basic and acidic residues; the sequence is KYLEDRQIPTKKESNTEDDT.

This sequence belongs to the LAZY family. Expressed in roots.

Its function is as follows. Involved in the development of the root system architecture by influencing lateral root angles and primary root length. This Prunus persica (Peach) protein is Protein DEEPER ROOTING 1.